The chain runs to 308 residues: Transcription initiation factor TFIID subunit 8 (308 aa).

Residues 1–29 (MADTAAGPGGSGTRPGSKQSTNPADNYHL) form a disordered region. A2 carries the post-translational modification N-acetylalanine. Polar residues predominate over residues 14–24 (RPGSKQSTNPA). Residues 35–102 (LQVVVSSLLT…VTLVEMGFNV (68 aa)) form the Histone-fold domain. T128 is modified (phosphothreonine). Residues 235 to 248 (MEETDSSEQEEQTD) show a composition bias toward acidic residues. Residues 235–308 (MEETDSSEQE…PKIRRKKSLS (74 aa)) are disordered. Residues 268–281 (ASVLQQSSSLSGSR) show a composition bias toward low complexity. S269 is modified (phosphoserine). Positions 292–305 (YLRPVKKPKIRRKK) match the Nuclear localization signal motif. A compositionally biased stretch (basic residues) spans 295–308 (PVKKPKIRRKKSLS).

This sequence belongs to the TAF8 family. Component of the TFIID basal transcription factor complex, composed of TATA-box-binding protein TBP, and a number of TBP-associated factors (TAFs), including TAF1, TAF2, TAF3, TAF4, TAF5, TAF6, TAF7, TAF8, TAF9, TAF10, TAF11, TAF12 and TAF13. Interacts with TBP, TAF1, TAF6, TAF10, TAF11 and TAF13. Component also of a small TAF complex (SMAT) containing TAF8, TAF10 and SUPT7L. Forms a heterodimer with TAF10. Interaction with TAF10 is mediated mainly via its histone fold domain while interaction with SUPT7L is via its C-terminal region. In terms of tissue distribution, low level of expression throughout the brain with slightly higher expression in the hippocampus.

It localises to the nucleus. It is found in the cytoplasm. The TFIID basal transcription factor complex plays a major role in the initiation of RNA polymerase II (Pol II)-dependent transcription. TFIID recognizes and binds promoters with or without a TATA box via its subunit TBP, a TATA-box-binding protein, and promotes assembly of the pre-initiation complex (PIC). The TFIID complex consists of TBP and TBP-associated factors (TAFs), including TAF1, TAF2, TAF3, TAF4, TAF5, TAF6, TAF7, TAF8, TAF9, TAF10, TAF11, TAF12 and TAF13. The TFIID complex structure can be divided into 3 modules TFIID-A, TFIID-B, and TFIID-C. TAF8 is involved in forming the TFIID-B module, together with TAF5. Mediates both basal and activator-dependent transcription. Plays a role in the differentiation of preadipocyte fibroblasts to adipocytes, however, does not seem to play a role in differentiation of myoblasts. Required for the integration of TAF10 in the TAF complex. May be important for survival of cells of the inner cell mass which constitute the pluripotent cell population of the early embryo. The polypeptide is Transcription initiation factor TFIID subunit 8 (Taf8) (Mus musculus (Mouse)).